The primary structure comprises 106 residues: Putative protein LRRC37A5P (106 aa).

The chain is Putative protein LRRC37A5P (LRRC37A5P) from Homo sapiens (Human).